The primary structure comprises 361 residues: Nicotinate-nucleotide--dimethylbenzimidazole phosphoribosyltransferase (361 aa).

Glu314 (proton acceptor) is an active-site residue.

This sequence belongs to the CobT family.

The catalysed reaction is 5,6-dimethylbenzimidazole + nicotinate beta-D-ribonucleotide = alpha-ribazole 5'-phosphate + nicotinate + H(+). Its pathway is nucleoside biosynthesis; alpha-ribazole biosynthesis; alpha-ribazole from 5,6-dimethylbenzimidazole: step 1/2. Catalyzes the synthesis of alpha-ribazole-5'-phosphate from nicotinate mononucleotide (NAMN) and 5,6-dimethylbenzimidazole (DMB). This chain is Nicotinate-nucleotide--dimethylbenzimidazole phosphoribosyltransferase, found in Mycobacterium bovis (strain BCG / Pasteur 1173P2).